The chain runs to 388 residues: Arrestin-C (388 aa).

The protein belongs to the arrestin family. As to quaternary structure, homodimer; disulfide-linked in response to retinal illumination. Interacts with CXCR4; the interaction is dependent on the C-terminal phosphorylation of CXCR4 and modulates the calcium ion mobilization activity of CXCR4. Interacts with GPR84. Inner and outer segments, and the inner plexiform regions of the retina.

The protein resides in the photoreceptor inner segment. The protein localises to the cell projection. It is found in the cilium. It localises to the photoreceptor outer segment. Functionally, may play a role in an as yet undefined retina-specific signal transduction. Could bind to photoactivated-phosphorylated red/green opsins. The chain is Arrestin-C (ARR3) from Homo sapiens (Human).